The primary structure comprises 1249 residues: MAGE-like protein 2 (1249 aa).

A compositionally biased stretch (polar residues) spans 1 to 10; it reads MSQLSKNLGD. 10 disordered regions span residues 1–50, 134–233, 300–327, 349–378, 410–433, 515–569, 647–679, 714–746, 862–910, and 930–957; these read MSQL…PPID, APGA…AQPP, QPPASGAPMAQPAAPPAQPMAPPAQPMA, PQVPQGPQAPPAQLATPPGWQATSPGWQAT, RQGPPPIRPGPPPIRPGPPPVRQA, QALP…LPAP, QPFQGAPPSQKAVQIQLPPQQAQASGPQAEVPT, LMTPSGECRASSIDRRGSSKERRTSSKERRAPS, PQAT…DWQG, and VSGDWEHPNTPRGLSGWEGPSTSRILSG. Composition is skewed to pro residues over residues 40–49 and 140–233; these read PPVPWDPPPI and AHPP…AQPP. Over residues 301 to 311 the composition is skewed to low complexity; sequence PPASGAPMAQP. Composition is skewed to pro residues over residues 312 to 324 and 349 to 358; these read AAPPAQPMAPPAQ and PQVPQGPQAP. Residues 369 to 378 are compositionally biased toward polar residues; the sequence is QATSPGWQAT. The segment covering 410-432 has biased composition (pro residues); that stretch reads RQGPPPIRPGPPPIRPGPPPVRQ. Low complexity predominate over residues 525–552; the sequence is QAPQARLPAPQVQAAPQVPTAPPATQVP. Residues 553–567 show a composition bias toward pro residues; the sequence is AAPPAGPQVPQPVLP. Residues 662–675 are compositionally biased toward low complexity; that stretch reads QLPPQQAQASGPQA. Residues 725–746 show a composition bias toward basic and acidic residues; sequence SIDRRGSSKERRTSSKERRAPS. Positions 862-871 are enriched in low complexity; sequence PQATATTQEA. Basic residues predominate over residues 881 to 891; it reads RSGKATRKKKH. The 200-residue stretch at 1020-1219 folds into the MAGE domain; that stretch reads LDERANALVQ…QSWPFHYLEA (200 aa). Residues 1226–1235 are compositionally biased toward acidic residues; sequence EDTDEDEPDT. A disordered region spans residues 1226–1249; that stretch reads EDTDEDEPDTGDSAHGPTSRPPPR.

As to quaternary structure, part of a complex consisting of MAGEL2, TRIM27 and USP7; directly interacts with USP7. Interacts with TRIM27. Interacts with VPS35; leading to recruitment at retromer-containing endosomes. Interacts with BMAL1 and PER2. Expressed in placenta, fetal and adult brain. Not detected in heart and small intestine, very low levels in fibroblasts. Not expressed in brain of a Prader-Willi patient.

The protein resides in the early endosome. It is found in the cytoplasm. Its subcellular location is the nucleus. Probably enhances ubiquitin ligase activity of RING-type zinc finger-containing E3 ubiquitin-protein ligases, possibly through recruitment and/or stabilization of the Ubl-conjugating enzyme (E2) at the E3:substrate complex. Acts as a regulator of retrograde transport via its interaction with VPS35. Recruited to retromer-containing endosomes and promotes the formation of 'Lys-63'-linked polyubiquitin chains at 'Lys-220' of WASHC1 together with TRIM27, leading to promote endosomal F-actin assembly. Regulates the circadian clock by repressing the transcriptional activator activity of the CLOCK-BMAL1 heterodimer. Significantly promotes the cytoplasmic accumulation of CLOCK. This Homo sapiens (Human) protein is MAGE-like protein 2 (MAGEL2).